The following is a 678-amino-acid chain: F-box/LRR-repeat protein 5 (678 aa).

The segment at 1–159 is hemerythrin-like; sequence MAPFPDEVDL…IKKKVIAQHC (159 aa). Positions 15, 57, 58, 61, 80, 126, and 130 each coordinate Fe(3+). Residues 202 to 248 form the F-box domain; sequence SSSISSLPPEVMLNIFTYLNPQDLCRCSQVNTEWAQLAKTGSLWRHL. The disordered stretch occupies residues 285–308; the sequence is YQEWDEDADIDESEETGEEEDSSI. A compositionally biased stretch (acidic residues) spans 287-306; sequence EWDEDADIDESEETGEEEDS. 7 LRR repeats span residues 314 to 340, 341 to 366, 367 to 392, 393 to 420, 566 to 594, 595 to 622, and 623 to 648; these read EKEL…VLAY, SSAT…DLTQ, TDIS…DLSG, CDKI…RLLK, HSDI…SLSG, CHQI…NLSG, and CLNV…HFYY. [2Fe-2S] cluster-binding residues include Cys-649, Cys-663, Cys-673, and Cys-674. The stretch at 655 to 678 is one LRR 8 repeat; it reads PHGATASGCQNLQCGFRMCCRSGE.

Part of a SCF (SKP1-cullin-F-box) protein ligase complex. [2Fe-2S] cluster is required as a cofactor. Ubiquitinated upon iron and oxygen depletion, leading to its degradation by the proteasome. Ubiquitination is regulated by the hemerythrin-like region that acts as an oxygen and iron sensor.

The protein resides in the cytoplasm. The protein localises to the perinuclear region. It is found in the nucleus. Its pathway is protein modification; protein ubiquitination. Component of some SCF (SKP1-cullin-F-box) protein ligase complex that plays a central role in iron homeostasis by promoting the ubiquitination and subsequent degradation of ireb2/irp2. Upon high iron and oxygen level, it specifically recognizes and binds ireb2/irp2, promoting its ubiquitination and degradation by the proteasome. In Xenopus laevis (African clawed frog), this protein is F-box/LRR-repeat protein 5 (fbxl5).